A 338-amino-acid chain; its full sequence is Methionine import ATP-binding protein MetN 2 (338 aa).

Residues 2–242 form the ABC transporter domain; that stretch reads IQLEGVSVDF…PQHAFTRQLV (241 aa). ATP is bound at residue 39–46; sequence GTSGAGKS.

The protein belongs to the ABC transporter superfamily. Methionine importer (TC 3.A.1.24) family. As to quaternary structure, the complex is composed of two ATP-binding proteins (MetN), two transmembrane proteins (MetI) and a solute-binding protein (MetQ).

Its subcellular location is the cell inner membrane. It catalyses the reaction L-methionine(out) + ATP + H2O = L-methionine(in) + ADP + phosphate + H(+). The catalysed reaction is D-methionine(out) + ATP + H2O = D-methionine(in) + ADP + phosphate + H(+). Functionally, part of the ABC transporter complex MetNIQ involved in methionine import. Responsible for energy coupling to the transport system. The sequence is that of Methionine import ATP-binding protein MetN 2 from Pectobacterium atrosepticum (strain SCRI 1043 / ATCC BAA-672) (Erwinia carotovora subsp. atroseptica).